Consider the following 265-residue polypeptide: Proline-rich protein 23B (265 aa).

Over residues 1–18 the composition is skewed to low complexity; that stretch reads MVSRPRSPSAFPAPWWGQ. Disordered stretches follow at residues 1–49 and 226–265; these read MVSR…EDPA and PSSPLQPLPPSPCVGSPGPHARSPLPERPPCKARRRLFQA. Residues 226-237 are compositionally biased toward pro residues; it reads PSSPLQPLPPSP. The segment covering 256 to 265 has biased composition (basic residues); sequence CKARRRLFQA.

It belongs to the PRR23 family.

The polypeptide is Proline-rich protein 23B (PRR23B) (Homo sapiens (Human)).